A 169-amino-acid polypeptide reads, in one-letter code: Large ribosomal subunit protein uL5 (169 aa).

The protein belongs to the universal ribosomal protein uL5 family. Part of the 50S ribosomal subunit; contacts the 5S rRNA and probably tRNA. Forms a bridge to the 30S subunit in the 70S ribosome.

This is one of the proteins that bind and probably mediate the attachment of the 5S RNA into the large ribosomal subunit, where it forms part of the central protuberance. In the 70S ribosome it contacts protein S13 of the 30S subunit (bridge B1b), connecting the 2 subunits; this bridge is implicated in subunit movement. May contact the P site tRNA; the 5S rRNA and some of its associated proteins might help stabilize positioning of ribosome-bound tRNAs. In Methanococcoides burtonii (strain DSM 6242 / NBRC 107633 / OCM 468 / ACE-M), this protein is Large ribosomal subunit protein uL5.